The following is a 107-amino-acid chain: U1-lycotoxin-Ls1b (107 aa).

The N-terminal stretch at 1–20 is a signal peptide; it reads MMKVLVVVALLVTLISYSSS. The propeptide occupies 21-41; that stretch reads EGIDDLEADELSSLMANEQTR. Intrachain disulfides connect Cys44/Cys59, Cys51/Cys68, Cys58/Cys86, and Cys70/Cys84.

Belongs to the neurotoxin 19 (CSTX) family. 04 (U1-Lctx) subfamily. In terms of tissue distribution, expressed by the venom gland.

Its subcellular location is the secreted. This chain is U1-lycotoxin-Ls1b, found in Lycosa singoriensis (Wolf spider).